The chain runs to 112 residues: Tyrosine-protein phosphatase 17 (112 aa).

Positions 1–112 (WRMIWEHECC…QPHTAGPIVV (112 aa)) constitute a Tyrosine-protein phosphatase domain. Aspartate 82 lines the substrate pocket.

Belongs to the protein-tyrosine phosphatase family.

The enzyme catalyses O-phospho-L-tyrosyl-[protein] + H2O = L-tyrosyl-[protein] + phosphate. This is Tyrosine-protein phosphatase 17 (STY-17) from Styela plicata (Wrinkled sea squirt).